The following is a 323-amino-acid chain: tRNA (guanine(9)-N1)-methyltransferase (323 aa).

Residues 1 to 16 (MTEQTSEATVVNNSPA) show a composition bias toward polar residues. Disordered regions lie at residues 1-34 (MTEQ…EIEE) and 192-215 (TGAP…NSTD). The segment covering 25–34 (EKPTPEEIEE) has biased composition (basic and acidic residues). Positions 99-319 (KAQPIPSRQI…KVLPPRKIKS (221 aa)) constitute an SAM-dependent MTase TRM10-type domain. Residues 204-215 (GNSNSNTTNSTD) are compositionally biased toward low complexity. Residues 225–226 (LT), Gly245, 249–253 (DKNRH), Cys257, Leu271, and 283–285 (HVL) contribute to the S-adenosyl-L-methionine site. Asp249 acts as the Proton acceptor in catalysis.

Belongs to the class IV-like SAM-binding methyltransferase superfamily. TRM10 family. As to quaternary structure, monomer.

It localises to the cytoplasm. Its subcellular location is the nucleus. It catalyses the reaction guanosine(9) in tRNA + S-adenosyl-L-methionine = N(1)-methylguanosine(9) in tRNA + S-adenosyl-L-homocysteine + H(+). S-adenosyl-L-methionine-dependent guanine N(1)-methyltransferase that catalyzes the formation of N(1)-methylguanine at position 9 (m1G9) in cytoplasmic tRNA. In Candida albicans (strain SC5314 / ATCC MYA-2876) (Yeast), this protein is tRNA (guanine(9)-N1)-methyltransferase.